The primary structure comprises 88 residues: Cell division topological specificity factor (88 aa).

It belongs to the MinE family.

In terms of biological role, prevents the cell division inhibition by proteins MinC and MinD at internal division sites while permitting inhibition at polar sites. This ensures cell division at the proper site by restricting the formation of a division septum at the midpoint of the long axis of the cell. The protein is Cell division topological specificity factor of Clostridium novyi (strain NT).